Reading from the N-terminus, the 589-residue chain is Chromodomain Y-like protein (589 aa).

Residues 1-10 show a composition bias toward polar residues; the sequence is MGLGSSQPST. The tract at residues 1–57 is disordered; sequence MGLGSSQPSTKEAEPCTLQEKEEHPVDDTRQQNNAVPATVSDPDQVSPAVQDAETQV. Over residues 11 to 30 the composition is skewed to basic and acidic residues; that stretch reads KEAEPCTLQEKEEHPVDDTR. The Chromo domain maps to 55–115; the sequence is TQVESIVDKR…RHNERQKEGT (61 aa). The interaction with EZH2 stretch occupies residues 55-300; that stretch reads TQVESIVDKR…TIQTSVTGVT (246 aa). A Phosphoserine modification is found at Ser82. Positions 110–155 are disordered; that stretch reads RQKEGTLARANRASPSNARKQISRSTHSALSKTNPKALVVGKDHES. Residues 117-128 are compositionally biased toward low complexity; it reads ARANRASPSNAR. The residue at position 129 (Lys129) is an N6,N6,N6-trimethyllysine; by EHMT2; alternate. Residue Lys129 is modified to N6,N6-dimethyllysine; by EHMT2; alternate. The residue at position 129 (Lys129) is an N6-methyllysine; by EHMT2; alternate. Residues 132-143 are compositionally biased toward polar residues; that stretch reads SRSTHSALSKTN. A phosphoserine mark is found at Ser164, Ser195, and Ser210. A disordered region spans residues 202-224; the sequence is SIDGFHGESPEKLDQGAEDTVTP. The segment covering 206-216 has biased composition (basic and acidic residues); it reads FHGESPEKLDQ. The segment at 353–585 is acetyl-CoA-binding domain; it reads SENNSLNPEV…DSMLKYLQRK (233 aa).

Forms multimers and multimerization is required for stable binding to chromatin. Interacts with HDAC1 and HDAC2 via its C-terminal acetyl-CoA-binding domain. Interacts with EZH2, EED, SUZ12, REST, EHMT1 and EHMT2. Part of a complex containing at least CDYL, REST, WIZ, SETB1, EHMT1 and EHMT2. Part of a complex containing at least CDYL, MIER1, MIER2, HDAC1 and HDAC2. Interacts with CHAF1A and CHAF1B; bridging the CAF-1 complex to the MCM2-7 (MCM) complex. Interacts with MCM3 and MCM5; bridging the CAF-1 complex to the MCM2-7 (MCM) complex. Recruited to Xist RNA-coated X chromosome. Interacts with EHMT2 and PRDM9; interaction only takes place when PRDM9 is bound to hotspot DNA. Expressed in the brain, with expression in the hippocampal dentate gyrus, CA1, striatum and cortex (at protein level). Expressed in the prelimbic cortex.

Its subcellular location is the nucleus. It localises to the chromosome. The catalysed reaction is 3-hydroxybutanoyl-CoA = (2E)-butenoyl-CoA + H2O. Its function is as follows. Chromatin reader protein that recognizes and binds histone H3 trimethylated at 'Lys-9', dimethylated at 'Lys-27' and trimethylated at 'Lys-27' (H3K9me3, H3K27me2 and H3K27me3, respectively). Part of multimeric repressive chromatin complexes, where it is required for transmission and restoration of repressive histone marks, thereby preserving the epigenetic landscape. Required for chromatin targeting and maximal enzymatic activity of Polycomb repressive complex 2 (PRC2); acts as a positive regulator of PRC2 activity by bridging the pre-existing histone H3K27me3 and newly recruited PRC2 on neighboring nucleosomes. Acts as a corepressor for REST by facilitating histone-lysine N-methyltransferase EHMT2 recruitment and H3K9 dimethylation at REST target genes for repression. Involved in X chromosome inactivation in females: recruited to Xist RNA-coated X chromosome and facilitates propagation of H3K9me2 by anchoring EHMT2. Promotes EZH2 accumulation and H3K27me3 methylation at DNA double strand breaks (DSBs), thereby facilitating transcriptional repression at sites of DNA damage and homology-directed repair of DSBs. Required for neuronal migration during brain development by repressing expression of RHOA. By repressing the expression of SCN8A, contributes to the inhibition of intrinsic neuronal excitability and epileptogenesis. In addition to acting as a chromatin reader, acts as a hydro-lyase. Shows crotonyl-coA hydratase activity by mediating the conversion of crotonyl-CoA ((2E)-butenoyl-CoA) to beta-hydroxybutyryl-CoA (3-hydroxybutanoyl-CoA), thereby acting as a negative regulator of histone crotonylation. Histone crotonylation is required during spermatogenesis; down-regulation of histone crotonylation by CDYL regulates the reactivation of sex chromosome-linked genes in round spermatids and histone replacement in elongating spermatids. By regulating histone crotonylation and trimethylation of H3K27, may be involved in stress-induced depression-like behaviors, possibly by regulating VGF expression. Displays acetyltransferase activity toward tubulin in vitro; such activity is however unsure in vivo and additional evidences would be required to confirm this result. Not able to recognize and bind histone H3K9me3, histone H3K27me2 and histone H3K27me3, due to the presence of a N-terminal extension that inactivates the chromo domain. This chain is Chromodomain Y-like protein, found in Rattus norvegicus (Rat).